Reading from the N-terminus, the 515-residue chain is Putative acetolactate synthase large subunit IlvX (515 aa).

Glu-48 is a thiamine diphosphate binding site. Residues Phe-249–Arg-269 and Asp-283–Asp-302 each bind FAD. A thiamine pyrophosphate binding region spans residues Thr-357–Ala-436. Asp-407 and Asn-434 together coordinate Mg(2+).

This sequence belongs to the TPP enzyme family. As to quaternary structure, heterodimer of large catalytic subunit and small regulatory subunit. Mg(2+) is required as a cofactor. Thiamine diphosphate serves as cofactor.

It catalyses the reaction 2 pyruvate + H(+) = (2S)-2-acetolactate + CO2. It functions in the pathway amino-acid biosynthesis; L-isoleucine biosynthesis; L-isoleucine from 2-oxobutanoate: step 1/4. Its pathway is amino-acid biosynthesis; L-valine biosynthesis; L-valine from pyruvate: step 1/4. In terms of biological role, catalyzes the conversion of 2 pyruvate molecules into acetolactate in the first common step of the biosynthetic pathway of the branched-amino acids such as leucine, isoleucine, and valine. In Mycobacterium tuberculosis (strain ATCC 25618 / H37Rv), this protein is Putative acetolactate synthase large subunit IlvX (ilvX).